A 708-amino-acid chain; its full sequence is tRNA(Met) cytidine acetyltransferase TmcA (708 aa).

ATP-binding positions include Gln189, 215–224 (GRGKTSALGL), and Arg357. In terms of domain architecture, N-acetyltransferase spans 398 to 574 (PECVEQPERL…YSLLMVRGEH (177 aa)). Residues 502 to 504 (IAV) and 509 to 515 (QRQGIGS) contribute to the acetyl-CoA site.

Belongs to the RNA cytidine acetyltransferase family. TmcA subfamily.

The protein localises to the cytoplasm. It carries out the reaction cytidine(34) in elongator tRNA(Met) + acetyl-CoA + ATP + H2O = N(4)-acetylcytidine(34) in elongator tRNA(Met) + ADP + phosphate + CoA + H(+). In terms of biological role, catalyzes the formation of N(4)-acetylcytidine (ac(4)C) at the wobble position of tRNA(Met), by using acetyl-CoA as an acetyl donor and ATP (or GTP). The protein is tRNA(Met) cytidine acetyltransferase TmcA of Vibrio cholerae serotype O1 (strain ATCC 39315 / El Tor Inaba N16961).